Reading from the N-terminus, the 295-residue chain is MSAKRTFTRIGAILGATALAGVTLTACGDSSGGDGFLAAIENGSVNVGTKYDQPGLGLRNPDNSMSGLDVDVAEYVVNSIADDKGWDHPTIEWRESPSAQRETLIQNGEVDMIAATYSINAGRSESVNFGGPYLLTHQALLVRQDDDRIETLEDLDNGLILCSVSGSTPAQKVKDVLPGVQLQEYDTYSSCVEALSQGNVDALTTDATILFGYSQQYEGDFRVVEMEKDGEPFTDEYYGIGLKKDDQEGTDAINAALERMYADGTFQRLLTENLGEDSVVVEEGTPGDLSFLDAS.

Residues 1–26 (MSAKRTFTRIGAILGATALAGVTLTA) form the signal peptide. A lipid anchor (N-palmitoyl cysteine) is attached at cysteine 27. Cysteine 27 carries the S-diacylglycerol cysteine lipid modification.

The protein belongs to the bacterial solute-binding protein 3 family. As to quaternary structure, the complex is composed of two ATP-binding proteins (GluA), two transmembrane proteins (GluC and GluD) and a solute-binding protein (GluB).

The protein localises to the cell membrane. Its activity is regulated as follows. Binding of glutamate or asparatate induces a higher thermal stability of the protein structure. Its function is as follows. Part of the ABC transporter complex GluABCD involved in glutamate uptake. Binds glutamate with a high affinity. Also binds aspartate with high affinity, suggesting that GluB could be involved in the transport of both amino acid residues into the cell. The protein is Glutamate-binding protein GluB of Corynebacterium glutamicum (strain ATCC 13032 / DSM 20300 / JCM 1318 / BCRC 11384 / CCUG 27702 / LMG 3730 / NBRC 12168 / NCIMB 10025 / NRRL B-2784 / 534).